Consider the following 235-residue polypeptide: 1-Cys peroxiredoxin (235 aa).

Residues 5-179 (ILLGDKFPDF…ILRVVDSLQL (175 aa)) form the Thioredoxin domain. C49 is an active-site residue. The active-site Cysteine sulfenic acid (-SOH) intermediate is the C49.

This sequence belongs to the peroxiredoxin family. Prx6 subfamily.

Its subcellular location is the cytoplasm. It carries out the reaction a hydroperoxide + [protein]-dithiol = [protein]-disulfide + an alcohol + H2O. Thiol-specific peroxidase that catalyzes the reduction of hydrogen peroxide and organic hydroperoxides to water and alcohols, respectively. Plays a role in cell protection against oxidative stress by detoxifying peroxides. The protein is 1-Cys peroxiredoxin of Dirofilaria immitis (Canine heartworm).